The sequence spans 118 residues: Putative pterin-4-alpha-carbinolamine dehydratase (118 aa).

It belongs to the pterin-4-alpha-carbinolamine dehydratase family.

It catalyses the reaction (4aS,6R)-4a-hydroxy-L-erythro-5,6,7,8-tetrahydrobiopterin = (6R)-L-erythro-6,7-dihydrobiopterin + H2O. This chain is Putative pterin-4-alpha-carbinolamine dehydratase, found in Azotobacter vinelandii (strain DJ / ATCC BAA-1303).